The following is a 174-amino-acid chain: Neuromedin-U (174 aa).

Residues 1 to 37 (MSRAANRRPGLSAGQLAAATASPLLSLLLLLACCADA) form the signal peptide. A propeptide spanning residues 38 to 105 (CRGTPISPQR…EQTEKDNAKR (68 aa)) is cleaved from the precursor. Met-141 carries the post-translational modification Methionine sulfoxide; partial. Residue Asn-166 is modified to Asparagine amide. The propeptide occupies 170 to 174 (STSFI).

This sequence belongs to the NmU family. Expressed throughout the gastrointestinal tract with highest levels in the duodenum and jejunum. Low levels in spinal cord, hypothalamus, and stomach. Neuromedin-U-23: Expressed in the small intestine and the pituitary gland (at protein level). Neuromedin precursor-related peptides: Expressed in pituitary gland and small intestine (at protein level).

It localises to the secreted. Functionally, ligand for receptors NMUR1 and NMUR2. Receptor-binding is very tight if not irreversible and triggers an increase in the cytosolic Ca(2+) concentration. Stimulates muscle contractions of specific regions of the gastrointestinal tract. In rat, NMU stimulates contractions of stomach circular muscle. Does not function as a ligand for either NMUR1 or NMUR2. Indirectly induces prolactin release although its potency is much lower than that of neuromedin precursor-related peptide 36. In terms of biological role, does not function as a ligand for either NMUR1 or NMUR2. Indirectly induces prolactin release from lactotroph cells in the pituitary gland, probably via the hypothalamic dopaminergic system. This chain is Neuromedin-U (Nmu), found in Rattus norvegicus (Rat).